The chain runs to 431 residues: Acrosin (431 aa).

The signal sequence occupies residues 1–16 (MLPTAVLLVLVVSVVA). Residue Asn19 is glycosylated (N-linked (GlcNAc...) asparagine). 6 disulfide bridges follow: Cys22-Cys152, Cys26-Cys160, Cys71-Cys87, Cys175-Cys244, Cys207-Cys223, and Cys234-Cys264. In terms of domain architecture, Peptidase S1 spans 40–288 (VVGGQAAQQG…FLDWIASRIG (249 aa)). Residues His86 and Asp140 each act as charge relay system in the active site. N-linked (GlcNAc...) asparagine glycosylation occurs at Asn208. The Charge relay system role is filled by Ser238. The interval 295 to 385 (IQPATPTPPT…PPPASTKPPQ (91 aa)) is disordered. Residues 331–341 (PHPHPHPHPHP) show a composition bias toward basic residues. Positions 342-381 (RPPQPPAAQAPPPPPPPPPPPPPPPPPPPPPPPPPPPAST) are enriched in pro residues. Positions 351–431 (APPPPPPPPP…TEIPEVTLAS (81 aa)) are cleaved as a propeptide — pro-rich.

The protein belongs to the peptidase S1 family. As to quaternary structure, heavy chain (catalytic) and a light chain linked by two disulfide bonds. Forms a heterodimer with SERPINA5.

The enzyme catalyses Preferential cleavage: Arg-|-Xaa, Lys-|-Xaa.. With respect to regulation, inhibited by SERPINA5. In terms of biological role, acrosin is the major protease of mammalian spermatozoa. It is a serine protease of trypsin-like cleavage specificity, it is synthesized in a zymogen form, proacrosin and stored in the acrosome. The sequence is that of Acrosin (ACR) from Oryctolagus cuniculus (Rabbit).